The primary structure comprises 196 residues: Peptidyl-tRNA hydrolase (196 aa).

TRNA is bound at residue Tyr-14. His-19 (proton acceptor) is an active-site residue. Residues Tyr-64, Asn-66, and Asn-112 each contribute to the tRNA site.

Belongs to the PTH family. In terms of assembly, monomer.

The protein resides in the cytoplasm. It carries out the reaction an N-acyl-L-alpha-aminoacyl-tRNA + H2O = an N-acyl-L-amino acid + a tRNA + H(+). Its function is as follows. Hydrolyzes ribosome-free peptidyl-tRNAs (with 1 or more amino acids incorporated), which drop off the ribosome during protein synthesis, or as a result of ribosome stalling. In terms of biological role, catalyzes the release of premature peptidyl moieties from peptidyl-tRNA molecules trapped in stalled 50S ribosomal subunits, and thus maintains levels of free tRNAs and 50S ribosomes. The protein is Peptidyl-tRNA hydrolase of Methylocella silvestris (strain DSM 15510 / CIP 108128 / LMG 27833 / NCIMB 13906 / BL2).